A 161-amino-acid chain; its full sequence is Troponin C, slow skeletal and cardiac muscles (161 aa).

Methionine 1 bears the N-acetylmethionine mark. EF-hand domains follow at residues 16-51, 52-87, 92-127, and 128-161; these read QKNEFKAAFDIFVLGAEDGCISTKELGKVMRMLGQN, PTPEELQEMIDEVDEDGSGTVDFDEFLVMMVRCMKD, KSEEELSDLFRMFDKNADGYIDLEELKIMLQATGET, and ITEDDIEELMKDGDKNNDGRIDYDEFLEFMKGVE. The Ca(2+) site is built by aspartate 65, aspartate 67, serine 69, threonine 71, and glutamate 76. Serine 98 is modified (phosphoserine). Positions 105, 107, 109, 111, 116, 141, 143, 145, 147, and 152 each coordinate Ca(2+).

Belongs to the troponin C family.

Troponin is the central regulatory protein of striated muscle contraction. Tn consists of three components: Tn-I which is the inhibitor of actomyosin ATPase, Tn-T which contains the binding site for tropomyosin and Tn-C. The binding of calcium to Tn-C abolishes the inhibitory action of Tn on actin filaments. In Bos taurus (Bovine), this protein is Troponin C, slow skeletal and cardiac muscles (TNNC1).